The primary structure comprises 354 residues: Protein-arginine kinase (354 aa).

The region spanning 24–254 (IVLSSRIRLA…QQIIQQEKMA (231 aa)) is the Phosphagen kinase C-terminal domain. Residues 27 to 31 (SSRIR), His-92, Arg-125, 176 to 180 (RASVM), and 207 to 212 (RGIYGE) contribute to the ATP site. An RDXXRA motif of the pArg binding pocket involved in allosteric regulation motif is present at residues 337-342 (RDYRRA).

It belongs to the ATP:guanido phosphotransferase family.

It carries out the reaction L-arginyl-[protein] + ATP = N(omega)-phospho-L-arginyl-[protein] + ADP + H(+). Its activity is regulated as follows. Appears to be allosterically activated by the binding of pArg-containing polypeptides to the pArg-binding pocket localized in the C-terminal domain of McsB. Its function is as follows. Catalyzes the specific phosphorylation of arginine residues in a large number of proteins. Is part of the bacterial stress response system. Protein arginine phosphorylation has a physiologically important role and is involved in the regulation of many critical cellular processes, such as protein homeostasis, motility, competence, and stringent and stress responses, by regulating gene expression and protein activity. The sequence is that of Protein-arginine kinase from Bacillus anthracis (strain A0248).